We begin with the raw amino-acid sequence, 154 residues long: Prefoldin subunit 2 (154 aa).

2 disordered regions span residues 1-20 and 126-154; these read MADS…GKGA and LMGE…VLVS. Residues 9-18 show a composition bias toward gly residues; the sequence is GKSGGSGTGK. Residues 126-139 are compositionally biased toward basic and acidic residues; the sequence is LMGEDEKPAAKENS. The segment covering 141–154 has biased composition (low complexity); it reads GAGAKSSSAGVLVS.

This sequence belongs to the prefoldin subunit beta family. In terms of assembly, heterohexamer of two PFD-alpha type and four PFD-beta type subunits. Component of the PAQosome complex which is responsible for the biogenesis of several protein complexes and which consists of R2TP complex members RUVBL1, RUVBL2, RPAP3 and PIH1D1, URI complex members PFDN2, PFDN6, PDRG1, UXT and URI1 as well as ASDURF, POLR2E and DNAAF10/WDR92. Interacts with URI1; the interaction is phosphorylation-dependent and occurs in a growth-dependent manner.

Its subcellular location is the nucleus. The protein localises to the cytoplasm. The protein resides in the mitochondrion. Functionally, binds specifically to cytosolic chaperonin (c-CPN) and transfers target proteins to it. Binds to nascent polypeptide chain and promotes folding in an environment in which there are many competing pathways for nonnative proteins. The sequence is that of Prefoldin subunit 2 (Pfdn2) from Rattus norvegicus (Rat).